Here is a 202-residue protein sequence, read N- to C-terminus: Ribosome maturation factor RimM (202 aa).

Residues 100–195 (ADEWYPKDLI…YLTLDPPGGL (96 aa)) form the PRC barrel domain.

The protein belongs to the RimM family. As to quaternary structure, binds ribosomal protein uS19.

The protein localises to the cytoplasm. Its function is as follows. An accessory protein needed during the final step in the assembly of 30S ribosomal subunit, possibly for assembly of the head region. Essential for efficient processing of 16S rRNA. May be needed both before and after RbfA during the maturation of 16S rRNA. It has affinity for free ribosomal 30S subunits but not for 70S ribosomes. This is Ribosome maturation factor RimM from Bifidobacterium longum (strain NCC 2705).